We begin with the raw amino-acid sequence, 431 residues long: Glucose-1-phosphate adenylyltransferase (431 aa).

Beta-D-fructose 1,6-bisphosphate is bound at residue Lys-39. 3 residues coordinate AMP: Arg-40, His-46, and Arg-52. Tyr-114 is a binding site for alpha-D-glucose 1-phosphate. Arg-130 is a binding site for AMP. Alpha-D-glucose 1-phosphate-binding positions include Gly-179, 194-195, and Ser-212; that span reads EK. AMP-binding residues include Glu-370 and Arg-386. Beta-D-fructose 1,6-bisphosphate is bound by residues 419–423 and 429–431; these read REMLR and QER.

Belongs to the bacterial/plant glucose-1-phosphate adenylyltransferase family. As to quaternary structure, homotetramer.

The enzyme catalyses alpha-D-glucose 1-phosphate + ATP + H(+) = ADP-alpha-D-glucose + diphosphate. It functions in the pathway glycan biosynthesis; glycogen biosynthesis. Allosterically activated by fructose-1,6-bisphosphate (F16BP) and inhibited by AMP. Functionally, involved in the biosynthesis of ADP-glucose, a building block required for the elongation reactions to produce glycogen. Catalyzes the reaction between ATP and alpha-D-glucose 1-phosphate (G1P) to produce pyrophosphate and ADP-Glc. This Salmonella arizonae (strain ATCC BAA-731 / CDC346-86 / RSK2980) protein is Glucose-1-phosphate adenylyltransferase.